The chain runs to 141 residues: Nucleoside diphosphate kinase (141 aa).

Residues K11, F59, R87, T93, R104, and N114 each coordinate ATP. Catalysis depends on H117, which acts as the Pros-phosphohistidine intermediate.

It belongs to the NDK family. As to quaternary structure, homotetramer. Mg(2+) serves as cofactor.

Its subcellular location is the cytoplasm. It catalyses the reaction a 2'-deoxyribonucleoside 5'-diphosphate + ATP = a 2'-deoxyribonucleoside 5'-triphosphate + ADP. It carries out the reaction a ribonucleoside 5'-diphosphate + ATP = a ribonucleoside 5'-triphosphate + ADP. Its function is as follows. Major role in the synthesis of nucleoside triphosphates other than ATP. The ATP gamma phosphate is transferred to the NDP beta phosphate via a ping-pong mechanism, using a phosphorylated active-site intermediate. This chain is Nucleoside diphosphate kinase, found in Pseudomonas entomophila (strain L48).